A 201-amino-acid chain; its full sequence is Pyridoxal 5'-phosphate synthase subunit PdxT (201 aa).

Residue 49 to 51 (GES) participates in L-glutamine binding. The Nucleophile role is filled by cysteine 81. L-glutamine is bound by residues arginine 110 and 139–140 (IR). Catalysis depends on charge relay system residues histidine 180 and glutamate 182.

It belongs to the glutaminase PdxT/SNO family. As to quaternary structure, in the presence of PdxS, forms a dodecamer of heterodimers. Only shows activity in the heterodimer.

The catalysed reaction is aldehydo-D-ribose 5-phosphate + D-glyceraldehyde 3-phosphate + L-glutamine = pyridoxal 5'-phosphate + L-glutamate + phosphate + 3 H2O + H(+). The enzyme catalyses L-glutamine + H2O = L-glutamate + NH4(+). It participates in cofactor biosynthesis; pyridoxal 5'-phosphate biosynthesis. In terms of biological role, catalyzes the hydrolysis of glutamine to glutamate and ammonia as part of the biosynthesis of pyridoxal 5'-phosphate. The resulting ammonia molecule is channeled to the active site of PdxS. The chain is Pyridoxal 5'-phosphate synthase subunit PdxT from Salinispora tropica (strain ATCC BAA-916 / DSM 44818 / JCM 13857 / NBRC 105044 / CNB-440).